The primary structure comprises 456 residues: Gamma-aminobutyric acid receptor subunit alpha-1 (456 aa).

The N-terminal stretch at 1 to 27 is a signal peptide; sequence MRKSPGLSDCLWAWILLLSTLTGRSYG. Over 28–253 the chain is Extracellular; the sequence is QPSLQDELKD…FHLKRKIGYF (226 aa). Asparagine 38 is a glycosylation site (N-linked (GlcNAc...) asparagine). Arginine 94 contributes to the 4-aminobutanoate binding site. An N-linked (GlcNAc...) asparagine glycan is attached at asparagine 138. Threonine 157 provides a ligand contact to 4-aminobutanoate. A disulfide bridge links cysteine 166 with cysteine 180. The chain crosses the membrane as a helical span at residues 254-274; the sequence is VIQTYLPCIMTVILSQVSFWL. The Cytoplasmic portion of the chain corresponds to 275–279; sequence NRESV. The chain crosses the membrane as a helical span at residues 280-301; it reads PARTVFGVTTVLTMTTLSISAR. The Extracellular segment spans residues 302 to 311; that stretch reads NSLPKVAYAT. A helical transmembrane segment spans residues 312 to 333; it reads AMDWFIAVCYAFVFSALIEFAT. The Cytoplasmic segment spans residues 334 to 421; it reads VNYFTKRGYA…TFNSVSKIDR (88 aa). The helical transmembrane segment at 422–441 threads the bilayer; the sequence is LSRIAFPLLFGIFNLIYWAT. Residues 442–456 are Extracellular-facing; the sequence is YLNREPQLKAPTPHQ.

It belongs to the ligand-gated ion channel (TC 1.A.9) family. Gamma-aminobutyric acid receptor (TC 1.A.9.5) subfamily. GABRA1 sub-subfamily. As to quaternary structure, heteropentamer, formed by a combination of alpha (GABRA1-6), beta (GABRB1-3), gamma (GABRG1-3), delta (GABRD), epsilon (GABRE), rho (GABRR1-3), pi (GABRP) and theta (GABRQ) subunits, each subunit exhibiting distinct physiological and pharmacological properties. Interacts with UBQLN1. Interacts with TRAK1. Interacts with KIF21B. Identified in a complex of 720 kDa composed of LHFPL4, NLGN2, GABRA1, GABRB2, GABRG2 and GABRB3. Interacts with LHFPL4. Interacts with NLGN2. Interacts with SHISA7; interaction leads to the regulation of GABA(A) receptor trafficking, channel deactivation kinetics and pharmacology.

The protein localises to the postsynaptic cell membrane. Its subcellular location is the cell membrane. The protein resides in the cytoplasmic vesicle membrane. It catalyses the reaction chloride(in) = chloride(out). Allosterically activated by benzodiazepines, the neuroanesthetic alphaxalone and pentobarbital. Inhibited by the antagonist bicuculline. Potentiated by histamine. Alpha subunit of the heteropentameric ligand-gated chloride channel gated by gamma-aminobutyric acid (GABA), a major inhibitory neurotransmitter in the brain. GABA-gated chloride channels, also named GABA(A) receptors (GABAAR), consist of five subunits arranged around a central pore and contain GABA active binding site(s) located at the alpha and beta subunit interface(s). When activated by GABA, GABAARs selectively allow the flow of chloride anions across the cell membrane down their electrochemical gradient. Alpha-1/GABRA1-containing GABAARs are largely synaptic. Chloride influx into the postsynaptic neuron following GABAAR opening decreases the neuron ability to generate a new action potential, thereby reducing nerve transmission. GABAARs containing alpha-1 and beta-2 or -3 subunits exhibit synaptogenic activity; the gamma-2 subunit being necessary but not sufficient to induce rapid synaptic contacts formation. GABAARs function also as histamine receptor where histamine binds at the interface of two neighboring beta subunits and potentiates GABA response. GABAARs containing alpha, beta and epsilon subunits also permit spontaneous chloride channel activity while preserving the structural information required for GABA-gated openings. Alpha-1-mediated plasticity in the orbitofrontal cortex regulates context-dependent action selection. Together with rho subunits, may also control neuronal and glial GABAergic transmission in the cerebellum. The chain is Gamma-aminobutyric acid receptor subunit alpha-1 (GABRA1) from Pongo abelii (Sumatran orangutan).